The following is a 535-amino-acid chain: Pre-mRNA-splicing factor SLU7-A (535 aa).

The interval 21–44 (EEARKAGLAPAEVDEDGKEINPHI) is disordered. The CCHC-type zinc-finger motif lies at 96–109 (CQNCGAMTHTAKAC). Positions 176 to 190 (LKKLEEKNNNEKGDD) are enriched in basic and acidic residues. Disordered stretches follow at residues 176 to 204 (LKKLEEKNNNEKGDDANSDGEEDEDDLRV) and 489 to 508 (EDLSRREEKDERKRKYNVKY). Residues 191–203 (ANSDGEEDEDDLR) show a composition bias toward acidic residues. Residue S193 is modified to Phosphoserine. A Nuclear localization signal motif is present at residues 486-493 (LKKEDLSR). Residues 489-501 (EDLSRREEKDERK) show a composition bias toward basic and acidic residues.

It belongs to the SLU7 family. Mainly expressed in tissues undergoing cell proliferation, particularly in lateral organs.

It localises to the nucleus. In terms of biological role, participates in the second catalytic step of pre-mRNA splicing, when the free hydroxyl group of exon I attacks the 3'-splice site to generate spliced mRNA and the excised lariat intron. Together with SMP2, involved in the timing of cell cycle arrest during leaf development, in a STRUWWELPETER (SWP) dependent manner; promotes cell proliferation in developing organs. The protein is Pre-mRNA-splicing factor SLU7-A of Arabidopsis thaliana (Mouse-ear cress).